Consider the following 102-residue polypeptide: NADH-quinone oxidoreductase subunit K (102 aa).

A run of 3 helical transmembrane segments spans residues 3 to 23 (IGLT…AFGI), 31 to 51 (IVLL…LVAF), and 66 to 86 (FILT…VVYF).

Belongs to the complex I subunit 4L family. NDH-1 is composed of 14 different subunits. Subunits NuoA, H, J, K, L, M, N constitute the membrane sector of the complex.

It is found in the cell inner membrane. The catalysed reaction is a quinone + NADH + 5 H(+)(in) = a quinol + NAD(+) + 4 H(+)(out). Its function is as follows. NDH-1 shuttles electrons from NADH, via FMN and iron-sulfur (Fe-S) centers, to quinones in the respiratory chain. The immediate electron acceptor for the enzyme in this species is believed to be ubiquinone. Couples the redox reaction to proton translocation (for every two electrons transferred, four hydrogen ions are translocated across the cytoplasmic membrane), and thus conserves the redox energy in a proton gradient. The protein is NADH-quinone oxidoreductase subunit K of Rhodospirillum centenum (strain ATCC 51521 / SW).